A 1372-amino-acid chain; its full sequence is Capping protein, Arp2/3 and myosin-I linker protein 3 (1372 aa).

Residues 126–151 are disordered; it reads RGNADTPEGPRDTSPNSETSTSTTHS. The segment covering 138–151 has biased composition (low complexity); it reads TSPNSETSTSTTHS. LRR repeat units follow at residues 244 to 264, 274 to 295, 303 to 323, 335 to 357, 365 to 385, 392 to 413, 424 to 444, 455 to 475, 482 to 501, and 509 to 530; these read SLEE…QKLA, VLHA…SLSQ, GLTK…QALG, SLRY…NALY, ALVH…LGAL, HLTY…EAPP, TLSH…RALL, DLHL…ALQE, CVGS…LTLV, and SLKH…EEIL. Disordered stretches follow at residues 865-900, 970-1003, and 1024-1372; these read TLSD…ELGT, KLRH…RQEN, and ESSS…PGTD. Positions 982-995 are enriched in pro residues; sequence PRTTPPGPGRPSMP. Positions 1040 to 1073 are necessary for localization at the cell membrane; that stretch reads SEAPLPPLQKKRRRGLFHFRRPRSFKGDRGPGSP. A compositionally biased stretch (basic residues) spans 1048 to 1063; that stretch reads QKKRRRGLFHFRRPRS. Pro residues predominate over residues 1079-1098; the sequence is LPPPPPPPPTQESPPSPDPP. The segment covering 1099-1109 has biased composition (low complexity); that stretch reads SLGNNSSPCWS. Basic and acidic residues-rich tracts occupy residues 1163-1177 and 1219-1229; these read ERAK…REGP and RRAEATWHIAE. Polar residues predominate over residues 1233 to 1244; sequence PNHSCQSPSPAS. Over residues 1348-1361 the composition is skewed to basic and acidic residues; that stretch reads QSCDKLEPDRRRPP.

Belongs to the CARMIL family. Widely expressed, with much higher levels in fetal tissues than in adult ones. Up-regulated in certain cancer tissues.

It localises to the cytoplasm. The protein resides in the cell membrane. The chain is Capping protein, Arp2/3 and myosin-I linker protein 3 from Homo sapiens (Human).